Here is a 352-residue protein sequence, read N- to C-terminus: Methylthioribose-1-phosphate isomerase (352 aa).

Substrate contacts are provided by residues 49 to 51 (RGA), arginine 93, and glutamine 202. Aspartate 243 acts as the Proton donor in catalysis. Position 253–254 (253–254 (NK)) interacts with substrate.

This sequence belongs to the eIF-2B alpha/beta/delta subunits family. MtnA subfamily.

The enzyme catalyses 5-(methylsulfanyl)-alpha-D-ribose 1-phosphate = 5-(methylsulfanyl)-D-ribulose 1-phosphate. It functions in the pathway amino-acid biosynthesis; L-methionine biosynthesis via salvage pathway; L-methionine from S-methyl-5-thio-alpha-D-ribose 1-phosphate: step 1/6. Its function is as follows. Catalyzes the interconversion of methylthioribose-1-phosphate (MTR-1-P) into methylthioribulose-1-phosphate (MTRu-1-P). The protein is Methylthioribose-1-phosphate isomerase of Magnetococcus marinus (strain ATCC BAA-1437 / JCM 17883 / MC-1).